A 603-amino-acid chain; its full sequence is Sulfoacetaldehyde acetyltransferase (603 aa).

This sequence belongs to the TPP enzyme family. Requires Mg(2+) as cofactor. Thiamine diphosphate is required as a cofactor.

It catalyses the reaction acetyl phosphate + sulfite + H(+) = sulfoacetaldehyde + phosphate. In terms of biological role, catalyzes the degradation of sulfoacetaldehyde into sulfite and acetyl phosphate. Involved in sulfolactate degradation. The protein is Sulfoacetaldehyde acetyltransferase of Roseovarius nubinhibens (strain ATCC BAA-591 / DSM 15170 / ISM).